The chain runs to 450 residues: Bifunctional protein GlmU (450 aa).

The tract at residues Met-1 to Arg-229 is pyrophosphorylase. UDP-N-acetyl-alpha-D-glucosamine contacts are provided by residues Leu-8–Gly-11, Lys-22, Gln-72, and Gly-77–Thr-78. Asp-102 serves as a coordination point for Mg(2+). Residues Gly-139, Glu-154, and Asn-227 each contribute to the UDP-N-acetyl-alpha-D-glucosamine site. Residue Asn-227 participates in Mg(2+) binding. Residues Val-230 to Asn-250 are linker. An N-acetyltransferase region spans residues Gly-251–Lys-450. UDP-N-acetyl-alpha-D-glucosamine-binding residues include Arg-332 and Lys-350. Residue His-362 is the Proton acceptor of the active site. UDP-N-acetyl-alpha-D-glucosamine-binding residues include Tyr-365 and Asn-376. Acetyl-CoA is bound by residues Asn-385–Tyr-386, Ala-422, and Arg-439.

It in the N-terminal section; belongs to the N-acetylglucosamine-1-phosphate uridyltransferase family. In the C-terminal section; belongs to the transferase hexapeptide repeat family. As to quaternary structure, homotrimer. Mg(2+) serves as cofactor.

It localises to the cytoplasm. It carries out the reaction alpha-D-glucosamine 1-phosphate + acetyl-CoA = N-acetyl-alpha-D-glucosamine 1-phosphate + CoA + H(+). It catalyses the reaction N-acetyl-alpha-D-glucosamine 1-phosphate + UTP + H(+) = UDP-N-acetyl-alpha-D-glucosamine + diphosphate. The protein operates within nucleotide-sugar biosynthesis; UDP-N-acetyl-alpha-D-glucosamine biosynthesis; N-acetyl-alpha-D-glucosamine 1-phosphate from alpha-D-glucosamine 6-phosphate (route II): step 2/2. Its pathway is nucleotide-sugar biosynthesis; UDP-N-acetyl-alpha-D-glucosamine biosynthesis; UDP-N-acetyl-alpha-D-glucosamine from N-acetyl-alpha-D-glucosamine 1-phosphate: step 1/1. It functions in the pathway bacterial outer membrane biogenesis; LPS lipid A biosynthesis. Functionally, catalyzes the last two sequential reactions in the de novo biosynthetic pathway for UDP-N-acetylglucosamine (UDP-GlcNAc). The C-terminal domain catalyzes the transfer of acetyl group from acetyl coenzyme A to glucosamine-1-phosphate (GlcN-1-P) to produce N-acetylglucosamine-1-phosphate (GlcNAc-1-P), which is converted into UDP-GlcNAc by the transfer of uridine 5-monophosphate (from uridine 5-triphosphate), a reaction catalyzed by the N-terminal domain. In Staphylococcus aureus (strain MRSA252), this protein is Bifunctional protein GlmU.